We begin with the raw amino-acid sequence, 180 residues long: Large ribosomal subunit protein uL6 (180 aa).

The protein belongs to the universal ribosomal protein uL6 family. In terms of assembly, part of the 50S ribosomal subunit.

Its function is as follows. This protein binds to the 23S rRNA, and is important in its secondary structure. It is located near the subunit interface in the base of the L7/L12 stalk, and near the tRNA binding site of the peptidyltransferase center. The polypeptide is Large ribosomal subunit protein uL6 (Clostridium botulinum (strain Okra / Type B1)).